Reading from the N-terminus, the 530-residue chain is Glucose-6-phosphate isomerase (530 aa).

The active-site Proton donor is E335. Catalysis depends on residues H366 and K495.

The protein belongs to the GPI family.

It is found in the cytoplasm. It carries out the reaction alpha-D-glucose 6-phosphate = beta-D-fructose 6-phosphate. It functions in the pathway carbohydrate biosynthesis; gluconeogenesis. It participates in carbohydrate degradation; glycolysis; D-glyceraldehyde 3-phosphate and glycerone phosphate from D-glucose: step 2/4. Functionally, catalyzes the reversible isomerization of glucose-6-phosphate to fructose-6-phosphate. The protein is Glucose-6-phosphate isomerase of Roseobacter denitrificans (strain ATCC 33942 / OCh 114) (Erythrobacter sp. (strain OCh 114)).